The primary structure comprises 458 residues: V-type sodium ATPase subunit B (458 aa).

This sequence belongs to the ATPase alpha/beta chains family.

Involved in ATP-driven sodium extrusion. The polypeptide is V-type sodium ATPase subunit B (ntpB) (Enterococcus hirae (strain ATCC 9790 / DSM 20160 / JCM 8729 / LMG 6399 / NBRC 3181 / NCIMB 6459 / NCDO 1258 / NCTC 12367 / WDCM 00089 / R)).